The chain runs to 256 residues: Ribonuclease T2 (256 aa).

Positions 1-24 (MRPAALRGALLGCLCLALLCLGGA) are cleaved as a signal peptide. Cys-48 and Cys-55 are joined by a disulfide. Residue His-65 is part of the active site. 3 disulfides stabilise this stretch: Cys-75–Cys-121, Cys-184–Cys-241, and Cys-202–Cys-213. N-linked (GlcNAc...) asparagine glycosylation is found at Asn-76 and Asn-106. Catalysis depends on residues Glu-114 and His-118. The N-linked (GlcNAc...) asparagine glycan is linked to Asn-212.

It belongs to the RNase T2 family. As to expression, ubiquitous. Higher expression levels observed in the temporal lobe and fetal brain.

It is found in the secreted. It localises to the lysosome lumen. Its subcellular location is the endoplasmic reticulum lumen. The protein resides in the mitochondrion intermembrane space. The catalysed reaction is a ribonucleotidyl-ribonucleotide-RNA + H2O = a 3'-end 3'-phospho-ribonucleotide-RNA + a 5'-end dephospho-ribonucleoside-RNA + H(+). The enzyme catalyses an adenylyl-uridine-RNA = a 3'-end 2',3'-cyclophospho-AMP-RNA + a 5'-end dephospho-uridine-RNA. It carries out the reaction a guanylyl-uridine-RNA = a 3'-end 2',3'-cyclophospho-GMP-RNA + a 5'-end dephospho-uridine-RNA. Inhibited by Zn(2+) and Cu(2+). In terms of biological role, ribonuclease that plays an essential role in innate immune response by recognizing and degrading RNAs from microbial pathogens that are subsequently sensed by TLR8. Cleaves preferentially single-stranded RNA molecules between purine and uridine residues, which critically contributes to the supply of catabolic uridine and the generation of purine-2',3'-cyclophosphate-terminated oligoribonucleotides. In turn, RNase T2 degradation products promote the RNA-dependent activation of TLR8. In plasmacytoid dendritic cells, it cooperates with PLD3 or PLD4 5'-&gt;3' exonucleases to process RNA fragments and release 2',3'-cyclic guanosine monophosphate (2',3'-cGMP), a potent stimulatory ligand for TLR7. Also plays a key role in degradation of mitochondrial RNA and processing of non-coding RNA imported from the cytosol into mitochondria. Participates as well in degradation of mitochondrion-associated cytosolic rRNAs. In Homo sapiens (Human), this protein is Ribonuclease T2 (RNASET2).